Here is a 248-residue protein sequence, read N- to C-terminus: Adenosylcobinamide-GDP ribazoletransferase (248 aa).

Transmembrane regions (helical) follow at residues 36–56, 59–79, 114–134, 137–157, 170–190, and 199–219; these read FFLP…YLGL, FLPA…VTGG, GTIA…SLVL, YSIA…FLCL, IFIG…ILAL, and ATII…LLCL.

This sequence belongs to the CobS family. It depends on Mg(2+) as a cofactor.

Its subcellular location is the cell membrane. It carries out the reaction alpha-ribazole + adenosylcob(III)inamide-GDP = adenosylcob(III)alamin + GMP + H(+). The enzyme catalyses alpha-ribazole 5'-phosphate + adenosylcob(III)inamide-GDP = adenosylcob(III)alamin 5'-phosphate + GMP + H(+). It participates in cofactor biosynthesis; adenosylcobalamin biosynthesis; adenosylcobalamin from cob(II)yrinate a,c-diamide: step 7/7. In terms of biological role, joins adenosylcobinamide-GDP and alpha-ribazole to generate adenosylcobalamin (Ado-cobalamin). Also synthesizes adenosylcobalamin 5'-phosphate from adenosylcobinamide-GDP and alpha-ribazole 5'-phosphate. This is Adenosylcobinamide-GDP ribazoletransferase from Clostridium botulinum (strain Kyoto / Type A2).